A 471-amino-acid polypeptide reads, in one-letter code: MKKTLYDKIYDSHIVYEEKNNTSLLYIDLHLLHEVTSPQAFDSLRDKNRKVRQPKKTFATMDHNVSTTSQDINASGSMAKVQMQELIKNCSEFNISLYDIKNPNQGIVHVISPEKGMTLPGMTIVCGDSHTSTHGAFGALSFGIGTSEVEHVLATQTLKQQRFKNMKIEITGEIQKFVTAKDLILFIIGKLGSSGGAGYIIEFCGNVIEKMSMEERMTICNMAIEIGAKSGLIAPDEVTFSYLKNKMYAPRGVFWKKALNFWKNLKSDKNAFFDKVVNINISDLSPQITWGTNPDQVISIDQKIPDFSSFDNLIKKDLAKSACKYMGLKIGTYLTNITVDKVFIGSCTNGRIEDLRAASKILKDKKIANNVKAIVVPGSGSVKREAENEGLDKIFISAGFEWRLPGCSMCLGMNKDRLNDGERCASTSNRNFEGRQGRGGRTHLVSPIMAAAAAVYGKFVDVRKLYNGENN.

Residues cysteine 347, cysteine 407, and cysteine 410 each contribute to the [4Fe-4S] cluster site.

The protein belongs to the aconitase/IPM isomerase family. LeuC type 1 subfamily. Heterodimer of LeuC and LeuD. [4Fe-4S] cluster serves as cofactor.

The enzyme catalyses (2R,3S)-3-isopropylmalate = (2S)-2-isopropylmalate. It functions in the pathway amino-acid biosynthesis; L-leucine biosynthesis; L-leucine from 3-methyl-2-oxobutanoate: step 2/4. Its function is as follows. Catalyzes the isomerization between 2-isopropylmalate and 3-isopropylmalate, via the formation of 2-isopropylmaleate. The polypeptide is 3-isopropylmalate dehydratase large subunit (Buchnera aphidicola subsp. Acyrthosiphon pisum (strain APS) (Acyrthosiphon pisum symbiotic bacterium)).